The following is a 256-amino-acid chain: Doublecortin domain-containing protein (256 aa).

The interval 71–103 (NVFERLTDTAYYTGSHRERFDEFGNGRGIAGRE) is partial p25alpha domain. Positions 152 to 226 (RLMWLYRNGD…AKYLCTSGEP (75 aa)) constitute a Doublecortin domain.

The protein localises to the cytoplasm. The protein resides in the cytoskeleton. Functionally, specifically required in the formation and maintenance of the conoid fibers; the conoid is a component of the cytoskeletal apical complex, which is composed of a left-handed spiral of 14 fibers made from a nontubular tubulin polymer. Promotes the organization, curvature, and stability of the conoid fibers, and probably bridges other conoid components to the tubulin core. The polypeptide is Doublecortin domain-containing protein (Toxoplasma gondii (strain ATCC 50861 / VEG)).